A 203-amino-acid chain; its full sequence is NAD(P)H dehydrogenase (quinone) (203 aa).

In terms of domain architecture, Flavodoxin-like spans 3-194 (VLIVYYSLYG…DAARFQGRHI (192 aa)). FMN-binding positions include 9-14 (SLYGHV) and 82-84 (TRF). Y11 contacts NAD(+). W102 contributes to the substrate binding site. FMN-binding positions include 117-123 (STATQHG) and H138.

Belongs to the WrbA family. FMN serves as cofactor.

It carries out the reaction a quinone + NADH + H(+) = a quinol + NAD(+). It catalyses the reaction a quinone + NADPH + H(+) = a quinol + NADP(+). The polypeptide is NAD(P)H dehydrogenase (quinone) (Solidesulfovibrio magneticus (strain ATCC 700980 / DSM 13731 / RS-1) (Desulfovibrio magneticus)).